The chain runs to 555 residues: Hydroxylamine reductase (555 aa).

[4Fe-4S] cluster contacts are provided by cysteine 3, cysteine 6, cysteine 18, and cysteine 25. Residues histidine 252, glutamate 276, cysteine 320, cysteine 407, cysteine 435, cysteine 460, glutamate 494, and lysine 496 each coordinate hybrid [4Fe-2O-2S] cluster. Cysteine persulfide is present on cysteine 407.

It belongs to the HCP family. [4Fe-4S] cluster serves as cofactor. Hybrid [4Fe-2O-2S] cluster is required as a cofactor.

It localises to the cytoplasm. It catalyses the reaction A + NH4(+) + H2O = hydroxylamine + AH2 + H(+). In terms of biological role, catalyzes the reduction of hydroxylamine to form NH(3) and H(2)O. This chain is Hydroxylamine reductase, found in Burkholderia lata (strain ATCC 17760 / DSM 23089 / LMG 22485 / NCIMB 9086 / R18194 / 383).